Consider the following 151-residue polypeptide: Large ribosomal subunit protein bL9 (151 aa).

This sequence belongs to the bacterial ribosomal protein bL9 family.

Its function is as follows. Binds to the 23S rRNA. The protein is Large ribosomal subunit protein bL9 of Francisella tularensis subsp. novicida (strain U112).